A 187-amino-acid polypeptide reads, in one-letter code: Oligoribonuclease (187 aa).

The Exonuclease domain occupies 7–170 (LCWLDMEMTG…DDILESIEEM (164 aa)). Tyrosine 128 is a catalytic residue.

The protein belongs to the oligoribonuclease family.

The protein resides in the cytoplasm. Functionally, 3'-to-5' exoribonuclease specific for small oligoribonucleotides. In Neisseria meningitidis serogroup A / serotype 4A (strain DSM 15465 / Z2491), this protein is Oligoribonuclease.